The following is a 125-amino-acid chain: Holo-[acyl-carrier-protein] synthase (125 aa).

Residues aspartate 8 and glutamate 57 each contribute to the Mg(2+) site.

The protein belongs to the P-Pant transferase superfamily. AcpS family. Mg(2+) serves as cofactor.

Its subcellular location is the cytoplasm. It catalyses the reaction apo-[ACP] + CoA = holo-[ACP] + adenosine 3',5'-bisphosphate + H(+). Its function is as follows. Transfers the 4'-phosphopantetheine moiety from coenzyme A to a Ser of acyl-carrier-protein. This chain is Holo-[acyl-carrier-protein] synthase, found in Nitrosomonas eutropha (strain DSM 101675 / C91 / Nm57).